The primary structure comprises 692 residues: Penicillin-binding protein activator LpoA (692 aa).

Residues 1–26 form the signal peptide; it reads MLSSITVRTKSGRLIPLVLAATLLAA. Residue Cys27 is the site of N-palmitoyl cysteine attachment. A lipid anchor (S-diacylglycerol cysteine) is attached at Cys27. Disordered regions lie at residues 297-316 and 324-373; these read AAAATDNGAPASSGTLAAAT and VNAA…PDAH. Over residues 332–363 the composition is skewed to low complexity; sequence PSAQGTDAAAPAAPNDSAALPPLDAAGDPIAP.

Belongs to the LpoA family. In terms of assembly, interacts with PBP1a.

The protein localises to the cell outer membrane. Its function is as follows. Regulator of peptidoglycan synthesis that is essential for the function of penicillin-binding protein 1A (PBP1a). This Edwardsiella piscicida protein is Penicillin-binding protein activator LpoA.